The following is a 503-amino-acid chain: NAD(P)H-quinone oxidoreductase chain 4, chloroplastic (503 aa).

The next 14 helical transmembrane spans lie at 3–23, 37–57, 84–104, 113–130, 134–154, 167–187, 208–228, 242–262, 274–294, 305–325, 330–350, 385–405, 416–436, and 462–482; these read FFPW…IVFF, LCIC…HFQV, GLSV…TLAA, LFHF…GLFA, LFLF…LLSM, FILY…GLTL, ALEI…SPIL, HYST…YGLI, SLFS…AALT, IAYS…SMTD, GALL…FLAG, SLAL…FGII, ILIS…SLSM, and LFLS…PDFV.

The protein belongs to the complex I subunit 4 family.

The protein localises to the plastid. Its subcellular location is the chloroplast thylakoid membrane. The enzyme catalyses a plastoquinone + NADH + (n+1) H(+)(in) = a plastoquinol + NAD(+) + n H(+)(out). The catalysed reaction is a plastoquinone + NADPH + (n+1) H(+)(in) = a plastoquinol + NADP(+) + n H(+)(out). The polypeptide is NAD(P)H-quinone oxidoreductase chain 4, chloroplastic (Ipomoea purpurea (Common morning glory)).